The following is a 207-amino-acid chain: Ribosomal RNA small subunit methyltransferase G (207 aa).

Residues G76, Q81, 127–128 (VE), and R141 each bind S-adenosyl-L-methionine.

It belongs to the methyltransferase superfamily. RNA methyltransferase RsmG family.

The protein localises to the cytoplasm. It catalyses the reaction guanosine(527) in 16S rRNA + S-adenosyl-L-methionine = N(7)-methylguanosine(527) in 16S rRNA + S-adenosyl-L-homocysteine. In terms of biological role, specifically methylates the N7 position of guanine in position 527 of 16S rRNA. This is Ribosomal RNA small subunit methyltransferase G from Neisseria meningitidis serogroup A / serotype 4A (strain DSM 15465 / Z2491).